We begin with the raw amino-acid sequence, 578 residues long: MVFTAPCWVPPLPSDLPDSTTLEEFIFCQVKDSQTRSELDRSILICGTQGREYTVQESMERTGRLAQGLSAWLNWPQKSPGKDWKVAAIFNVNCVDFFSISHAIHRLGGTISAINASSTADELEAQLRLSNAQAIFTCNTLLKIAMKASQRVGIPLANIFLTDAPGSYRPDDVYPFQEIDNIVRTAKSSLPLLQLGRGQGASTPAYICFSSGTSGAQKPVLLSHQGIIANIVQINTFEKFRQKGPNISLCILPLAHSYGLVCVAYSALYRGDRLAVLPSSGVEDLLSIVEKLKINTLYLVPTLVSRILSGGKAGRHDLRCVKEVYTGGAPLHPMLGEHILRHHPTWKIKQCYGATEAGTAVSVTSDCDLWPGSVGCLLPGVQAKIVKSDGSETTKHDESGELWVSSPSLAIGYLSNPLATKTTFTVDNTGKTWLRTGDEVKICLSPNGNEHLFIVDRIKDIIKVKGFQVAPVELEQLLLSNDFVEEVAVTSRQDEGEEERPQAFVVRSQVGLEEPQGAVAESLHALVKARKARYKWLHPHVIFVDSLPKTTSGKIMRRALRNMSPANSEVNSRLSSKI.

Residues 210-218 (SSGTSGAQK), 350-355 (QCYGAT), D438, R457, and K554 contribute to the ATP site. The SBD1 stretch occupies residues 281-350 (GVEDLLSIVE…RHHPTWKIKQ (70 aa)). The segment at 351 to 413 (CYGATEAGTA…VSSPSLAIGY (63 aa)) is SBD2. The Peroxisomal targeting signal type 1 signature appears at 576–578 (SKI).

Belongs to the ATP-dependent AMP-binding enzyme family.

It localises to the peroxisome. Its pathway is mycotoxin biosynthesis. Functionally, acyl-CoA ligase; part of the gene clusters that mediate the biosynthesis of the host-selective toxins (HSTs) AF-toxins responsible for Alternaria black spot of strawberry disease by the strawberry pathotype. AF-toxin I and III are valine derivatives of 2,3-dyhydroxy-isovaleric acid and 2-hydroxy-isovaleric acid respectively, while AF II is an isoleucine derivative of 2-hydroxy-valeric acid. These derivatives are bound to a 9,10-epoxy-8-hydroxy-9-methyl-decatrienoic acid (EDA) moiety. On cellular level, AF-toxins affect plasma membrane of susceptible cells and cause a sudden increase in loss of K(+) after a few minutes of toxin treatment. The aldo-keto reductase AFTS1 catalyzes the conversion of 2-keto-isovaleric acid (2-KIV) to 2-hydroxy-isovaleric acid (2-HIV) by reduction of its ketone to an alcohol. The acyl-CoA ligase AFT1, the hydrolase AFT2 and the enoyl-CoA hydratases AFT3 and AFT6, but also the polyketide synthase AFT9, the acyl-CoA dehydrogenase AFT10, the cytochrome P450 monooxygenase AFT11 and the oxidoreductase AFT12 are all involved in the biosynthesis of the AK-, AF- and ACT-toxin common EDA structural moiety. The exact role of each enzyme, and of additional enzymes identified within the AF-toxin clusters have still to be determined. This Alternaria alternata (Alternaria rot fungus) protein is Acyl-CoA ligase AFT1-1.